A 213-amino-acid chain; its full sequence is Putative protein Brevis radix-like 3 (213 aa).

The disordered stretch occupies residues 7–27 (CSSKEGGEDGSRGAATPHGRD). The BRX domain maps to 158-213 (REWTAQVEPGVQITFVTLPGGGNDLKRIRFSRERFGEDRAKVWWEHNRDRIQAQYL).

It belongs to the BRX family.

Its subcellular location is the nucleus. The protein is Putative protein Brevis radix-like 3 (BRXL3) of Oryza sativa subsp. japonica (Rice).